Consider the following 185-residue polypeptide: Ribosome-recycling factor (185 aa).

The protein belongs to the RRF family.

Its subcellular location is the cytoplasm. Responsible for the release of ribosomes from messenger RNA at the termination of protein biosynthesis. May increase the efficiency of translation by recycling ribosomes from one round of translation to another. This Clostridium botulinum (strain Alaska E43 / Type E3) protein is Ribosome-recycling factor.